Reading from the N-terminus, the 503-residue chain is Glucosaminyl-phosphatidylinositol-acyltransferase PIGW (503 aa).

Over 1–21 (MSQKQLKEAFVRNLSGTSVLE) the chain is Lumenal. N-linked (GlcNAc...) asparagine glycosylation occurs at N13. Residues 22–42 (VTQGLCFPAFCILCRGLWIIF) traverse the membrane as a helical segment. At 43-48 (SQHVCS) the chain is on the cytoplasmic side. The helical transmembrane segment at 49-71 (FSNTWSTRFLMDFVVLIVPLVIT) threads the bilayer. Topologically, residues 72-74 (LTV) are lumenal. A helical transmembrane segment spans residues 75 to 97 (LSSFILLENLTVIVWGAWLLYQI). Over 98–131 (YHRRTCYAKVPVQKVFANFLKISLESEYNPAITC) the chain is Cytoplasmic. The chain crosses the membrane as a helical span at residues 132–152 (YRVINSVFTAIAILAVDFPLF). Over 153–160 (PRRFAKTE) the chain is Lumenal. A helical membrane pass occupies residues 161-181 (LYGTGAMDFGVGGFIFGAAMV). Residues 182 to 201 (CPEVRRKSIEESRFNYLRKS) are Cytoplasmic-facing. A helical membrane pass occupies residues 202–222 (LYSVWPLVFLGMGRLVIIKSI). The Lumenal segment spans residues 223–236 (GYQEHSTEYGIHWN). Residues 237–257 (FFFTIIVVRLVTSLLLIIFPL) traverse the membrane as a helical segment. At 258–259 (NK) the chain is on the cytoplasmic side. The chain crosses the membrane as a helical span at residues 260 to 280 (SWIVAVSITVVYQLALDYTPL). Over 281-304 (KRILLYGTDGSGTRVGFLNANREG) the chain is Lumenal. Residues 305 to 325 (IISTLGYVTIHMAGVQTGLYV) form a helical membrane-spanning segment. The Cytoplasmic segment spans residues 326–339 (LKGRAQVRDWIKAT). A helical transmembrane segment spans residues 340–360 (CWVFSVAVGFFISLHIVQVNI). Topologically, residues 361–380 (EAVSRRMANLAFCLWVVASS) are lumenal. A helical transmembrane segment spans residues 381-401 (LMLLSCLLLSGIILSFAQFLI). The Cytoplasmic portion of the chain corresponds to 402-447 (KGSLVPCSWKLIQSPTTHKNHSESLILEAEKNQPSLCLITALNRNQ). S415 carries the post-translational modification Phosphoserine. The chain crosses the membrane as a helical span at residues 448-468 (LFFFLLSNITTGLINLTMDTL). Residues 469–472 (HTGA) are Lumenal-facing. The chain crosses the membrane as a helical span at residues 473–493 (LWTLVVLSIYMFTNCLVIYVL). Residues 494 to 503 (DLQGKTIKFW) are Cytoplasmic-facing.

Belongs to the PIGW family.

The protein resides in the endoplasmic reticulum membrane. It functions in the pathway glycolipid biosynthesis; glycosylphosphatidylinositol-anchor biosynthesis. Its function is as follows. Acyltransferase that catalyzes the acyl transfer from an acyl-CoA at the 2-OH position of the inositol ring of glucosaminyl phosphatidylinositol (GlcN-PI) to generate GlcN-(acyl)PI and participates in the fourth step of GPI-anchor biosynthesi. Required for the transport of GPI-anchored proteins to the plasma membrane. Acetylation during GPI-anchor biosynthesis is not essential for the subsequent mannosylation and is usually removed soon after the attachment of GPIs to proteins. This is Glucosaminyl-phosphatidylinositol-acyltransferase PIGW from Mus musculus (Mouse).